Reading from the N-terminus, the 311-residue chain is Interleukin-20 receptor subunit beta (311 aa).

The signal sequence occupies residues methionine 1–threonine 29. The Extracellular portion of the chain corresponds to aspartate 30–leucine 233. Fibronectin type-III domains are found at residues alanine 37–threonine 136 and glutamate 144–glycine 228. N-linked (GlcNAc...) asparagine glycosylation occurs at asparagine 40. A disulfide bond links cysteine 89 and cysteine 97. N-linked (GlcNAc...) asparagine glycosylation occurs at asparagine 134. An intrachain disulfide couples cysteine 202 to cysteine 223. The chain crosses the membrane as a helical span at residues valine 234–valine 254. Topologically, residues tryptophan 255 to serine 311 are cytoplasmic.

The protein belongs to the type II cytokine receptor family. As to quaternary structure, heterodimer with IL20RA and heterodimer with IL22RA1. In terms of tissue distribution, widely expressed with highest levels in skin and testis. Highly expressed in psoriatic skin.

The protein localises to the membrane. The IL20RA/IL20RB dimer is a receptor for IL19, IL20 and IL24. The IL22RA1/IL20RB dimer is a receptor for IL20 and IL24. The chain is Interleukin-20 receptor subunit beta (IL20RB) from Homo sapiens (Human).